Here is a 664-residue protein sequence, read N- to C-terminus: DNA mismatch repair protein MutL (664 aa).

The protein belongs to the DNA mismatch repair MutL/HexB family.

Functionally, this protein is involved in the repair of mismatches in DNA. It is required for dam-dependent methyl-directed DNA mismatch repair. May act as a 'molecular matchmaker', a protein that promotes the formation of a stable complex between two or more DNA-binding proteins in an ATP-dependent manner without itself being part of a final effector complex. This Clostridium beijerinckii (strain ATCC 51743 / NCIMB 8052) (Clostridium acetobutylicum) protein is DNA mismatch repair protein MutL.